We begin with the raw amino-acid sequence, 261 residues long: Homeobox protein ceh-33 (261 aa).

A DNA-binding region (homeobox) is located at residues 133 to 192 (GEETSYCFRDKSRVLLRDWYCRNSYPSPREKRELAEKTHLTVTQVSNWFKNRRQRDRAGV).

Belongs to the SIX/Sine oculis homeobox family.

It localises to the nucleus. This Caenorhabditis elegans protein is Homeobox protein ceh-33 (ceh-33).